A 110-amino-acid chain; its full sequence is Mobility group protein 1B (110 aa).

Positions 5 to 71 form a DNA-binding region, HMG box; that stretch reads PKRPLSAYML…NYIRALQEYE (67 aa). Residues 71–81 are compositionally biased toward basic and acidic residues; it reads ERNGGGGDDKG. Residues 71–110 form a disordered region; the sequence is ERNGGGGDDKGKKRKGAAPKKGAGKKSKKGAHSDDDGDSE. A compositionally biased stretch (basic residues) spans 82-100; the sequence is KKRKGAAPKKGAGKKSKKG.

Belongs to the HMGB family.

The protein localises to the nucleus. Its subcellular location is the chromosome. Its function is as follows. Found in condensed chromomeres. Binds preferentially to AT-rich DNA. This chain is Mobility group protein 1B (HMG1B), found in Chironomus tentans (Midge).